A 585-amino-acid chain; its full sequence is A-type ATP synthase subunit A (585 aa).

Positions 192–211 are disordered; sequence MRQEWPVREPRPTVEKKTPR. Residues 196–211 are compositionally biased toward basic and acidic residues; it reads WPVREPRPTVEKKTPR. 237 to 244 is a binding site for ATP; that stretch reads GPFGSGKT.

This sequence belongs to the ATPase alpha/beta chains family. As to quaternary structure, has multiple subunits with at least A(3), B(3), C, D, E, F, H, I and proteolipid K(x).

Its subcellular location is the cell membrane. The catalysed reaction is ATP + H2O + 4 H(+)(in) = ADP + phosphate + 5 H(+)(out). Functionally, component of the A-type ATP synthase that produces ATP from ADP in the presence of a proton gradient across the membrane. The A chain is the catalytic subunit. This Haloquadratum walsbyi (strain DSM 16790 / HBSQ001) protein is A-type ATP synthase subunit A.